Here is a 511-residue protein sequence, read N- to C-terminus: Exodeoxyribonuclease 7 large subunit (511 aa).

Belongs to the XseA family. As to quaternary structure, heterooligomer composed of large and small subunits.

Its subcellular location is the cytoplasm. The catalysed reaction is Exonucleolytic cleavage in either 5'- to 3'- or 3'- to 5'-direction to yield nucleoside 5'-phosphates.. Functionally, bidirectionally degrades single-stranded DNA into large acid-insoluble oligonucleotides, which are then degraded further into small acid-soluble oligonucleotides. In Brucella ovis (strain ATCC 25840 / 63/290 / NCTC 10512), this protein is Exodeoxyribonuclease 7 large subunit.